The following is a 452-amino-acid chain: UDP-N-acetylmuramoylalanine--D-glutamate ligase (452 aa).

119 to 125 is a binding site for ATP; it reads GSNGKTT.

The protein belongs to the MurCDEF family.

It localises to the cytoplasm. The catalysed reaction is UDP-N-acetyl-alpha-D-muramoyl-L-alanine + D-glutamate + ATP = UDP-N-acetyl-alpha-D-muramoyl-L-alanyl-D-glutamate + ADP + phosphate + H(+). Its pathway is cell wall biogenesis; peptidoglycan biosynthesis. Functionally, cell wall formation. Catalyzes the addition of glutamate to the nucleotide precursor UDP-N-acetylmuramoyl-L-alanine (UMA). The sequence is that of UDP-N-acetylmuramoylalanine--D-glutamate ligase from Streptococcus pyogenes serotype M12 (strain MGAS9429).